The sequence spans 254 residues: Phosphoribosylaminoimidazole-succinocarboxamide synthase (254 aa).

Belongs to the SAICAR synthetase family.

It catalyses the reaction 5-amino-1-(5-phospho-D-ribosyl)imidazole-4-carboxylate + L-aspartate + ATP = (2S)-2-[5-amino-1-(5-phospho-beta-D-ribosyl)imidazole-4-carboxamido]succinate + ADP + phosphate + 2 H(+). It participates in purine metabolism; IMP biosynthesis via de novo pathway; 5-amino-1-(5-phospho-D-ribosyl)imidazole-4-carboxamide from 5-amino-1-(5-phospho-D-ribosyl)imidazole-4-carboxylate: step 1/2. This Brucella melitensis biotype 2 (strain ATCC 23457) protein is Phosphoribosylaminoimidazole-succinocarboxamide synthase.